The following is a 122-amino-acid chain: Large ribosomal subunit protein uL14 (122 aa).

It belongs to the universal ribosomal protein uL14 family. As to quaternary structure, part of the 50S ribosomal subunit. Forms a cluster with proteins L3 and L19. In the 70S ribosome, L14 and L19 interact and together make contacts with the 16S rRNA in bridges B5 and B8.

In terms of biological role, binds to 23S rRNA. Forms part of two intersubunit bridges in the 70S ribosome. The sequence is that of Large ribosomal subunit protein uL14 from Geobacillus thermodenitrificans (strain NG80-2).